A 274-amino-acid chain; its full sequence is 4-diphosphocytidyl-2-C-methyl-D-erythritol kinase (274 aa).

Residue Lys10 is part of the active site. 101 to 111 (PTQAGLGGGSA) serves as a coordination point for ATP. Asp143 is an active-site residue.

The protein belongs to the GHMP kinase family. IspE subfamily.

It catalyses the reaction 4-CDP-2-C-methyl-D-erythritol + ATP = 4-CDP-2-C-methyl-D-erythritol 2-phosphate + ADP + H(+). It functions in the pathway isoprenoid biosynthesis; isopentenyl diphosphate biosynthesis via DXP pathway; isopentenyl diphosphate from 1-deoxy-D-xylulose 5-phosphate: step 3/6. Catalyzes the phosphorylation of the position 2 hydroxy group of 4-diphosphocytidyl-2C-methyl-D-erythritol. The polypeptide is 4-diphosphocytidyl-2-C-methyl-D-erythritol kinase (Helicobacter pylori (strain HPAG1)).